The chain runs to 465 residues: Dihydrolipoyl dehydrogenase (465 aa).

FAD contacts are provided by residues 34–42, Lys-51, and Gly-114; that span reads EEREAGGTC. Cys-42 and Cys-47 form a disulfide bridge. Residues 180 to 184, Glu-203, Val-237, and 264 to 267 contribute to the NAD(+) site; these read GGGVI and SIGR. 2 residues coordinate FAD: Asp-307 and Ala-315. His-439 serves as the catalytic Proton acceptor.

The protein belongs to the class-I pyridine nucleotide-disulfide oxidoreductase family. FAD serves as cofactor.

It is found in the cytoplasm. It carries out the reaction N(6)-[(R)-dihydrolipoyl]-L-lysyl-[protein] + NAD(+) = N(6)-[(R)-lipoyl]-L-lysyl-[protein] + NADH + H(+). The branched-chain alpha-keto dehydrogenase complex catalyzes the overall conversion of alpha-keto acids to acyl-CoA and CO(2). It contains multiple copies of 3 enzymatic components: branched-chain alpha-keto acid decarboxylase (E1), lipoamide acyltransferase (E2) and lipoamide dehydrogenase (E3). This Chlamydia muridarum (strain MoPn / Nigg) protein is Dihydrolipoyl dehydrogenase (lpdA).